We begin with the raw amino-acid sequence, 192 residues long: NADH dehydrogenase [ubiquinone] iron-sulfur protein 3 (192 aa).

This sequence belongs to the complex I 30 kDa subunit family. Complex I is composed of about 45 different subunits. This is a component of the iron-sulfur (IP) fragment of the enzyme.

Its subcellular location is the mitochondrion inner membrane. It carries out the reaction a ubiquinone + NADH + 5 H(+)(in) = a ubiquinol + NAD(+) + 4 H(+)(out). Core subunit of the mitochondrial membrane respiratory chain NADH dehydrogenase (Complex I) that is believed to belong to the minimal assembly required for catalysis. Complex I functions in the transfer of electrons from NADH to the respiratory chain. The immediate electron acceptor for the enzyme is believed to be ubiquinone. This is NADH dehydrogenase [ubiquinone] iron-sulfur protein 3 (NAD9) from Beta vulgaris (Sugar beet).